The following is a 272-amino-acid chain: Microcin B17-processing protein McbC (272 aa).

This sequence to R.leguminosarum TfxB which is involved in the processing of trifolitoxin.

The protein localises to the cytoplasm. In terms of biological role, necessary to process the inactive microcin B17 (McbA) precursor into the active peptide. The sequence is that of Microcin B17-processing protein McbC (mcbC) from Escherichia coli.